We begin with the raw amino-acid sequence, 353 residues long: MAGGKIRKEKPKASNRAPSNHYQGGISFHKSKGQHILKNPLLVDSIVQKAGIKSTDVILEIGPGTGNLTKKLLEAGKEVIAVELDSRMVLELQRRFQGTPFSNRLKVIQGDVLKTELPRFDICVANIPYQISSPLTFKLLFHPTSFRCAVIMYQREFAMRLVAQPGDNLYCRLSVNTQLYARVSHLLKVGKNNFRPPPKVDSSVVRIEPRRPGPQVNKKEWDGFLRVCFIRKNKTLGSIFKQKSVLSMLEKNFKTLQAVLASLQNNGEPALNTTSMDLGDQSMGMEDDDNEMDDDDMEMDEGEGDGGETSEFKEKVMNVLKEGGFEEKRSSKLSQQEFLYLLSLFNKSGIHFT.

Positions 1-10 (MAGGKIRKEK) are enriched in basic residues. A disordered region spans residues 1–23 (MAGGKIRKEKPKASNRAPSNHYQ). S-adenosyl-L-methionine is bound by residues His35, Leu37, Gly62, Glu83, Asp111, and Asn126. The segment at 270–313 (ALNTTSMDLGDQSMGMEDDDNEMDDDDMEMDEGEGDGGETSEFK) is disordered. The span at 285–308 (MEDDDNEMDDDDMEMDEGEGDGGE) shows a compositional bias: acidic residues.

Belongs to the class I-like SAM-binding methyltransferase superfamily. rRNA adenine N(6)-methyltransferase family. Expressed in rapidly dividing tissues, including root meristems and lateral root primordia, developing cotyledons and leaves, petals, anther, pollen grains and silique abscission zone.

It is found in the nucleus. It localises to the nucleolus. It carries out the reaction adenosine(1785)/adenosine(1786) in 18S rRNA + 4 S-adenosyl-L-methionine = N(6)-dimethyladenosine(1785)/N(6)-dimethyladenosine(1786) in 18S rRNA + 4 S-adenosyl-L-homocysteine + 4 H(+). In terms of biological role, N6-adenine methyltransferase which modifies the AA dinucleotide at the plant nuclear 18S rRNA nucleotides A1785 and A1786. Required for generating appropriate patterns of gene expression during root development, including the cell-specific expression of transcriptional regulators involved in root hair and non-hair cells patterning. The sequence is that of Ribosomal RNA small subunit methyltransferase from Arabidopsis thaliana (Mouse-ear cress).